Here is a 344-residue protein sequence, read N- to C-terminus: Arginine N-succinyltransferase (344 aa).

Leucine 125 lines the succinyl-CoA pocket. Histidine 229 acts as the Proton donor in catalysis.

The protein belongs to the arginine N-succinyltransferase family.

The catalysed reaction is succinyl-CoA + L-arginine = N(2)-succinyl-L-arginine + CoA + H(+). The protein operates within amino-acid degradation; L-arginine degradation via AST pathway; L-glutamate and succinate from L-arginine: step 1/5. Functionally, catalyzes the transfer of succinyl-CoA to arginine to produce N(2)-succinylarginine. The sequence is that of Arginine N-succinyltransferase from Salmonella arizonae (strain ATCC BAA-731 / CDC346-86 / RSK2980).